The following is a 105-amino-acid chain: ATP synthase subunit c (105 aa).

A run of 2 helical transmembrane segments spans residues 32–52 (SILGAMIGLGIAAFGGAIGMG) and 78–98 (VAMAMIEAQVIYTLVFAIIAI).

Belongs to the ATPase C chain family. In terms of assembly, F-type ATPases have 2 components, F(1) - the catalytic core - and F(0) - the membrane proton channel. F(1) has five subunits: alpha(3), beta(3), gamma(1), delta(1), epsilon(1). F(0) has three main subunits: a(1), b(2) and c(10-14). The alpha and beta chains form an alternating ring which encloses part of the gamma chain. F(1) is attached to F(0) by a central stalk formed by the gamma and epsilon chains, while a peripheral stalk is formed by the delta and b chains.

It localises to the cell inner membrane. Functionally, f(1)F(0) ATP synthase produces ATP from ADP in the presence of a proton or sodium gradient. F-type ATPases consist of two structural domains, F(1) containing the extramembraneous catalytic core and F(0) containing the membrane proton channel, linked together by a central stalk and a peripheral stalk. During catalysis, ATP synthesis in the catalytic domain of F(1) is coupled via a rotary mechanism of the central stalk subunits to proton translocation. In terms of biological role, key component of the F(0) channel; it plays a direct role in translocation across the membrane. A homomeric c-ring of between 10-14 subunits forms the central stalk rotor element with the F(1) delta and epsilon subunits. The polypeptide is ATP synthase subunit c (Helicobacter pylori (strain ATCC 700392 / 26695) (Campylobacter pylori)).